The chain runs to 205 residues: Phosphoribosyl-dephospho-CoA transferase (205 aa).

Active-site residues include Asp134 and Asp136.

It belongs to the MdcG family.

The catalysed reaction is apo-[malonate decarboxylase ACP] + 2'-(5''-triphospho-alpha-D-ribosyl)-3'-dephospho-CoA = holo-[malonate decarboxylase ACP] + diphosphate. Its function is as follows. Transfers 2'-(5-triphosphoribosyl)-3'-dephosphocoenzyme-A to the apo-[acyl-carrier-protein] of the malonate decarboxylase to yield holo-[acyl-carrier-protein]. The protein is Phosphoribosyl-dephospho-CoA transferase of Klebsiella pneumoniae (strain 342).